The primary structure comprises 187 residues: Resolvase OPG149 (187 aa).

Belongs to the RuvC family. Poxviruses-type subfamily. Requires Mg(2+) as cofactor.

Its function is as follows. Plays a role in DNA replication by cleaving viral DNA concatamers to yield unit-length viral genomes. The concatamer junctions contain inverted repeat sequences that can be extruded as cruciforms, yielding Holliday junctions that A22 protein cleaves. The protein is Resolvase OPG149 (OPG149) of Cynomys gunnisoni (Gunnison's prairie dog).